The primary structure comprises 797 residues: Ubiquitin carboxyl-terminal hydrolase 14 (797 aa).

Residues 156–266 form a UBP-type; degenerate zinc finger; that stretch reads LISEHALTLQ…EHLAHFGIDF (111 aa). Zn(2+) contacts are provided by C180, C183, C200, and H213. A USP domain is found at 308-796; the sequence is TGLVNLGNSC…MGYVYFFQRL (489 aa). Catalysis depends on C317, which acts as the Nucleophile. 2 UBA domains span residues 613–654 and 670–710; these read VANE…LLSH and DIDQ…VFNN. H758 acts as the Proton acceptor in catalysis.

The protein belongs to the peptidase C19 family. As to expression, constitutively and ubiquitously expressed (at protein level).

The enzyme catalyses Thiol-dependent hydrolysis of ester, thioester, amide, peptide and isopeptide bonds formed by the C-terminal Gly of ubiquitin (a 76-residue protein attached to proteins as an intracellular targeting signal).. In terms of biological role, recognizes and hydrolyzes the peptide bond at the C-terminal Gly of ubiquitin. Involved in the processing of poly-ubiquitin precursors as well as that of ubiquitinated proteins. Involved in seed and embryo development. In Arabidopsis thaliana (Mouse-ear cress), this protein is Ubiquitin carboxyl-terminal hydrolase 14 (UBP14).